Consider the following 138-residue polypeptide: Nucleoside diphosphate kinase (138 aa).

ATP contacts are provided by Lys10, Phe58, Arg86, Thr92, Arg103, and Asn113. The active-site Pros-phosphohistidine intermediate is His116.

This sequence belongs to the NDK family. In terms of assembly, homotetramer. Requires Mg(2+) as cofactor.

Its subcellular location is the cytoplasm. The catalysed reaction is a 2'-deoxyribonucleoside 5'-diphosphate + ATP = a 2'-deoxyribonucleoside 5'-triphosphate + ADP. The enzyme catalyses a ribonucleoside 5'-diphosphate + ATP = a ribonucleoside 5'-triphosphate + ADP. Functionally, major role in the synthesis of nucleoside triphosphates other than ATP. The ATP gamma phosphate is transferred to the NDP beta phosphate via a ping-pong mechanism, using a phosphorylated active-site intermediate. The sequence is that of Nucleoside diphosphate kinase from Actinobacillus pleuropneumoniae serotype 5b (strain L20).